A 37-amino-acid chain; its full sequence is Non-specific lipid-transfer protein P4 (37 aa).

This sequence belongs to the plant LTP family.

Its subcellular location is the secreted. Functionally, plant non-specific lipid-transfer proteins transfer phospholipids as well as galactolipids across membranes. May play a role in wax or cutin deposition in the cell walls of expanding epidermal cells and certain secretory tissues. The chain is Non-specific lipid-transfer protein P4 from Vitis sp. (Grape).